We begin with the raw amino-acid sequence, 302 residues long: Probable alpha-L-glutamate ligase (302 aa).

An ATP-grasp domain is found at 104 to 287; sequence LQLLSRKGVG…VAGLLIKFIE (184 aa). Residues lysine 141, 178–179, aspartate 187, and 211–213 contribute to the ATP site; these read EY and RSN. Mg(2+)-binding residues include aspartate 248, glutamate 260, and asparagine 262. Residues aspartate 248, glutamate 260, and asparagine 262 each contribute to the Mn(2+) site.

Belongs to the RimK family. Mg(2+) serves as cofactor. Mn(2+) is required as a cofactor.

The polypeptide is Probable alpha-L-glutamate ligase (Alcanivorax borkumensis (strain ATCC 700651 / DSM 11573 / NCIMB 13689 / SK2)).